Consider the following 445-residue polypeptide: Glutamate-1-semialdehyde 2,1-aminomutase (445 aa).

K264 is modified (N6-(pyridoxal phosphate)lysine).

This sequence belongs to the class-III pyridoxal-phosphate-dependent aminotransferase family. HemL subfamily. It depends on pyridoxal 5'-phosphate as a cofactor.

Its subcellular location is the cytoplasm. It catalyses the reaction (S)-4-amino-5-oxopentanoate = 5-aminolevulinate. Its pathway is porphyrin-containing compound metabolism; protoporphyrin-IX biosynthesis; 5-aminolevulinate from L-glutamyl-tRNA(Glu): step 2/2. This Halobacterium salinarum (strain ATCC 29341 / DSM 671 / R1) protein is Glutamate-1-semialdehyde 2,1-aminomutase.